A 374-amino-acid chain; its full sequence is DNA replication and repair protein RecF (374 aa).

ATP is bound at residue 30-37 (GNNAQGKS).

The protein belongs to the RecF family.

The protein localises to the cytoplasm. Its function is as follows. The RecF protein is involved in DNA metabolism; it is required for DNA replication and normal SOS inducibility. RecF binds preferentially to single-stranded, linear DNA. It also seems to bind ATP. In Nostoc punctiforme (strain ATCC 29133 / PCC 73102), this protein is DNA replication and repair protein RecF.